The chain runs to 574 residues: MVNHLAGMFGSAVGMMSNSRARALEIFTEITNYDESACDAWVGRIGCGDTDRVTLFRAWYSRSNFGQLAGAAEISMNGVGARIPIGGIYSRDITYPINSPLAITMGFAVHEASEGNYTDAMEALEDAPAAGSEHLVSWVRAVIYGAGQRWTEVIDQVRGAERWPDKFLAAAAGVAHGVAAANLGLFTEADRRLTEANDTPVAQACAPVIAWYLAMARRSQGNEESAQVLLEWLQANFPEPKVTAALRDPAYRLETTTAEKIAARSDPWDPSSVVADTSARDKLLVEAQAELDRQIGLGRVKEQIEAYRAATQMARIRAARGMKVAQTSKHMIFAGPPGTGKTTIARVVANILAGLGVIAEPKLIETSRKDFVAEYEGQSAVKTSKTIDRALGGVLFIDEAYTLVQERNGQTDPFGAEALDTLLARMENDRDRLVVIIAGYSNDIDRLLEVNDGLRSRFATRIEFDSYSPDEIVEISKVIATANDSRLDDTAAKRVLEAATTLSQRSLNGKPALDIAGNGRYARQLVEAGEQNRDMRLARSLDFDSLGVDQLSEINGDDMAAAIASVHSRLNIGE.

An ATP-binding site is contributed by 335–342 (GPPGTGKT).

It belongs to the CbxX/CfxQ family. In terms of assembly, part of the ESX-1 / type VII secretion system (T7SS), which is composed of cytosolic and membrane components.

The protein localises to the cytoplasm. In terms of biological role, part of the ESX-1 / type VII specialized secretion system (T7SS), which exports several proteins including EsxA and EsxB. Plays a role in DNA conjugation, in both donor and recipient strains. EccA1 exhibits ATPase activity and may provide energy for the export of ESX-1 substrates. The chain is ESX-1 secretion system protein EccA1 from Mycolicibacterium smegmatis (strain ATCC 700084 / mc(2)155) (Mycobacterium smegmatis).